The chain runs to 146 residues: Protein mago nashi homolog (146 aa).

Residue Met-1 is modified to N-acetylmethionine.

This sequence belongs to the mago nashi family. Heterodimer with RBM8A. Core component of the mRNA splicing-dependent exon junction complex (EJC); the core complex contains CASC3, EIF4A3, MAGOH or MAGOHB, and RBM8A. Component of the ALYREF/THOC4-EJC-RNA complex; in the complex interacts with EIF4A3, RBM8A and THOC4 (via the RRM domain); these interactions are likely specific to RNA-bound EJC. Interacts with PYM1; the interaction is direct and dissociates the EJC from spliced mRNAs. Identified in a complex composed of the EJC core, UPF3B and UPF2. The EJC core can also interact with UPF3A (in vitro). Identified in the spliceosome C complex. In terms of tissue distribution, ubiquitous.

It is found in the nucleus. The protein localises to the nucleus speckle. The protein resides in the cytoplasm. In terms of biological role, required for pre-mRNA splicing as component of the spliceosome. Plays a redundant role with MAGOHB as core component of the exon junction complex (EJC) and in the nonsense-mediated decay (NMD) pathway. The EJC is a dynamic structure consisting of core proteins and several peripheral nuclear and cytoplasmic associated factors that join the complex only transiently either during EJC assembly or during subsequent mRNA metabolism. The EJC marks the position of the exon-exon junction in the mature mRNA for the gene expression machinery and the core components remain bound to spliced mRNAs throughout all stages of mRNA metabolism thereby influencing downstream processes including nuclear mRNA export, subcellular mRNA localization, translation efficiency and nonsense-mediated mRNA decay (NMD). The MAGOH-RBM8A heterodimer inhibits the ATPase activity of EIF4A3, thereby trapping the ATP-bound EJC core onto spliced mRNA in a stable conformation. The MAGOH-RBM8A heterodimer interacts with the EJC key regulator PYM1 leading to EJC disassembly in the cytoplasm and translation enhancement of EJC-bearing spliced mRNAs by recruiting them to the ribosomal 48S pre-initiation complex. Involved in the splicing modulation of BCL2L1/Bcl-X (and probably other apoptotic genes); specifically inhibits formation of proapoptotic isoforms such as Bcl-X(S); the function is different from the established EJC assembly. The polypeptide is Protein mago nashi homolog (MAGOH) (Homo sapiens (Human)).